The following is a 495-amino-acid chain: Lysine--tRNA ligase (495 aa).

Mg(2+) contacts are provided by glutamate 406 and glutamate 413.

It belongs to the class-II aminoacyl-tRNA synthetase family. In terms of assembly, homodimer. Requires Mg(2+) as cofactor.

The protein localises to the cytoplasm. The enzyme catalyses tRNA(Lys) + L-lysine + ATP = L-lysyl-tRNA(Lys) + AMP + diphosphate. In Staphylococcus saprophyticus subsp. saprophyticus (strain ATCC 15305 / DSM 20229 / NCIMB 8711 / NCTC 7292 / S-41), this protein is Lysine--tRNA ligase.